The primary structure comprises 77 residues: MQFPVFFFRCFSYGISSMPLKNKVVFNENMERKDTFYQLILKVLSALLLLSVRNSSGHTRHFVQSSEKIYRRSLFKQ.

A helical transmembrane segment spans residues 36 to 52; the sequence is FYQLILKVLSALLLLSV.

The protein localises to the membrane. This is an uncharacterized protein from Saccharomyces cerevisiae (strain ATCC 204508 / S288c) (Baker's yeast).